The chain runs to 92 residues: Progonadoliberin-1 (92 aa).

The first 23 residues, 1-23 (METIPKLMAAVVLLTVCLEGCSS), serve as a signal peptide directing secretion. Residue Gln24 is modified to Pyrrolidone carboxylic acid. A Glycine amide modification is found at Gly33.

The protein belongs to the GnRH family. In terms of processing, the precursor is cleaved by ACE, which removes the Gly-Lys-Arg peptide at the C-terminus, leading to mature hormone. The mature form of Gonadoliberin-1 is also cleaved and degraded by ACE. Central nervous system.

The protein localises to the secreted. Stimulates the secretion of gonadotropins; it stimulates the secretion of both luteinizing and follicle-stimulating hormones. This chain is Progonadoliberin-1 (Gnrh1), found in Rattus norvegicus (Rat).